A 475-amino-acid polypeptide reads, in one-letter code: ATP synthase subunit beta, chloroplastic (475 aa).

Residue Gly-155–Thr-162 participates in ATP binding.

Belongs to the ATPase alpha/beta chains family. As to quaternary structure, F-type ATPases have 2 components, CF(1) - the catalytic core - and CF(0) - the membrane proton channel. CF(1) has five subunits: alpha(3), beta(3), gamma(1), delta(1), epsilon(1). CF(0) has four main subunits: a(1), b(1), b'(1) and c(9-12).

It localises to the plastid. The protein resides in the chloroplast thylakoid membrane. The enzyme catalyses ATP + H2O + 4 H(+)(in) = ADP + phosphate + 5 H(+)(out). Produces ATP from ADP in the presence of a proton gradient across the membrane. The catalytic sites are hosted primarily by the beta subunits. This chain is ATP synthase subunit beta, chloroplastic, found in Pyropia yezoensis (Susabi-nori).